A 121-amino-acid polypeptide reads, in one-letter code: Acid shock protein (121 aa).

A signal peptide spans Met-1–Ala-21. A propeptide spanning residues Ala-22 to Gln-63 is cleaved from the precursor. Residues Ala-40–Ala-121 form a disordered region. Over residues Val-74 to Gln-83 the composition is skewed to low complexity. Residues Ala-84 to Ser-93 are compositionally biased toward basic residues. Residues Val-94 to Gln-103 are compositionally biased toward low complexity. Positions Ala-104–Lys-113 are enriched in basic residues.

The protein belongs to the Asr family. Proteolytic processing gives rise to the active protein.

It is found in the periplasm. Required for growth and/or survival at acidic conditions. This is Acid shock protein from Yersinia pseudotuberculosis serotype O:1b (strain IP 31758).